Reading from the N-terminus, the 95-residue chain is Aspartyl/glutamyl-tRNA(Asn/Gln) amidotransferase subunit C (95 aa).

This sequence belongs to the GatC family. Heterotrimer of A, B and C subunits.

The enzyme catalyses L-glutamyl-tRNA(Gln) + L-glutamine + ATP + H2O = L-glutaminyl-tRNA(Gln) + L-glutamate + ADP + phosphate + H(+). It catalyses the reaction L-aspartyl-tRNA(Asn) + L-glutamine + ATP + H2O = L-asparaginyl-tRNA(Asn) + L-glutamate + ADP + phosphate + 2 H(+). In terms of biological role, allows the formation of correctly charged Asn-tRNA(Asn) or Gln-tRNA(Gln) through the transamidation of misacylated Asp-tRNA(Asn) or Glu-tRNA(Gln) in organisms which lack either or both of asparaginyl-tRNA or glutaminyl-tRNA synthetases. The reaction takes place in the presence of glutamine and ATP through an activated phospho-Asp-tRNA(Asn) or phospho-Glu-tRNA(Gln). In Chelativorans sp. (strain BNC1), this protein is Aspartyl/glutamyl-tRNA(Asn/Gln) amidotransferase subunit C.